Reading from the N-terminus, the 175-residue chain is Adenine phosphoribosyltransferase (175 aa).

It belongs to the purine/pyrimidine phosphoribosyltransferase family. In terms of assembly, homodimer.

It localises to the cytoplasm. It catalyses the reaction AMP + diphosphate = 5-phospho-alpha-D-ribose 1-diphosphate + adenine. The protein operates within purine metabolism; AMP biosynthesis via salvage pathway; AMP from adenine: step 1/1. Functionally, catalyzes a salvage reaction resulting in the formation of AMP, that is energically less costly than de novo synthesis. The protein is Adenine phosphoribosyltransferase of Synechococcus sp. (strain JA-2-3B'a(2-13)) (Cyanobacteria bacterium Yellowstone B-Prime).